The following is a 270-amino-acid chain: MFRIGIVGAGAIGKEIARAIDNGTVPAKLEAIYDRDTAEATSFAASLKSKPRVLPLEELVEASNFVVEAAAQSAVREVAIAALSRSRSVMIMSVGALADKELLETIRTMAKEHCCSIYLPSGAIGGLDAVKAASICKIDSVTITTRKPRDGLRGAPFIVRNNIDVDSMDEPTEIFSGPAAVAIKEFPANVNVAASLSLVGIGFERTLVRVVVDPTIKRNIHEISVRGEFGELHTVVENVPARSNPKTSFLAALSAIATLRQVCEPLKIGT.

Residues A123 and N191 each coordinate NAD(+). H221 is an active-site residue.

This sequence belongs to the L-aspartate dehydrogenase family.

The catalysed reaction is L-aspartate + NADP(+) + H2O = oxaloacetate + NH4(+) + NADPH + H(+). It catalyses the reaction L-aspartate + NAD(+) + H2O = oxaloacetate + NH4(+) + NADH + H(+). It participates in cofactor biosynthesis; NAD(+) biosynthesis; iminoaspartate from L-aspartate (dehydrogenase route): step 1/1. Its function is as follows. Specifically catalyzes the NAD or NADP-dependent dehydrogenation of L-aspartate to iminoaspartate. This chain is L-aspartate dehydrogenase, found in Methanocella arvoryzae (strain DSM 22066 / NBRC 105507 / MRE50).